The chain runs to 71 residues: Beta-defensin 9 (71 aa).

The signal sequence occupies residues 1–23; that stretch reads MRTLCSLLLICCLLFSYDTPVVG. Intrachain disulfides connect cysteine 37/cysteine 66, cysteine 44/cysteine 59, and cysteine 49/cysteine 67.

It belongs to the beta-defensin family.

The protein resides in the secreted. In terms of biological role, has antibacterial activity. This chain is Beta-defensin 9 (Defb9), found in Rattus norvegicus (Rat).